A 119-amino-acid polypeptide reads, in one-letter code: Small ribosomal subunit protein bS16 (119 aa).

Residues 81–119 (GLAKRPARNNPKKAEPGQKAKERAAARAEKAGAGDDAAA) form a disordered region. A compositionally biased stretch (basic and acidic residues) spans 92 to 113 (KKAEPGQKAKERAAARAEKAGA).

Belongs to the bacterial ribosomal protein bS16 family.

The protein is Small ribosomal subunit protein bS16 of Methylobacterium sp. (strain 4-46).